We begin with the raw amino-acid sequence, 66 residues long: Large ribosomal subunit protein bL33c (66 aa).

Belongs to the bacterial ribosomal protein bL33 family.

The protein localises to the plastid. It is found in the chloroplast. The protein is Large ribosomal subunit protein bL33c of Fagopyrum esculentum subsp. ancestrale (Wild buckwheat).